A 538-amino-acid polypeptide reads, in one-letter code: MEIKEISVPQQGVVADYMNGKKEIQSCFDYMLTEDAFKQRLHDLREREFFRQDLVAHLLEYNTKLQAGESTLQNVKALGDENTYVVIAGQQAGLLTGPLYTIHKVISILQLAKEKEESLGVKVVPVFWIAGEDHDMDEINHTFVAKNKKMKKTIFYDRNPKKASASESELSVEDCRNWIEEIFKTYPETNFTKDVLKFVDDALKKSNTYVDFFAHLITKIFANSGLILVDSHHPELRKLEIPFFKRIISKYKEVQEGLRNQQEVIKELGYKPIIETKSHAVHIFMEIDNERVLLEDQQGKFVGKDGAHSFSYEELIEEMERNPARFSNNVVTRPLMQEYVFPTLAFIGGPGELAYWSELQQVFHTVGFQMPPVVPRLTITYVERDIATDLFDLQLRESDPFLNDVDKLRENWLSNQIEEPIDDHFEKAKKEIADIHTSLQRFVKKIEPGLGAFAGKNELKINEQIELLERMLKRNVEKKYEVQLNKFRRIQFALRPLGAPQERVWNVCYYLNQFGLDFVDRVMENSFSWDGKHHVIKL.

Residues 248 to 268 (ISKYKEVQEGLRNQQEVIKEL) adopt a coiled-coil conformation.

It belongs to the BshC family.

Its function is as follows. Involved in bacillithiol (BSH) biosynthesis. May catalyze the last step of the pathway, the addition of cysteine to glucosamine malate (GlcN-Mal) to generate BSH. The polypeptide is Putative cysteine ligase BshC (Bacillus cereus (strain B4264)).